Consider the following 897-residue polypeptide: Isoleucine--tRNA ligase (897 aa).

The 'HIGH' region motif lies at 59 to 69; that stretch reads PYANGDIHVGH. An L-isoleucyl-5'-AMP-binding site is contributed by E553. A 'KMSKS' region motif is present at residues 594-598; that stretch reads KMSKS. An ATP-binding site is contributed by K597. Zn(2+)-binding residues include C866, C869, C883, and C886.

This sequence belongs to the class-I aminoacyl-tRNA synthetase family. IleS type 1 subfamily. Monomer. Zn(2+) serves as cofactor.

It is found in the cytoplasm. The catalysed reaction is tRNA(Ile) + L-isoleucine + ATP = L-isoleucyl-tRNA(Ile) + AMP + diphosphate. In terms of biological role, catalyzes the attachment of isoleucine to tRNA(Ile). As IleRS can inadvertently accommodate and process structurally similar amino acids such as valine, to avoid such errors it has two additional distinct tRNA(Ile)-dependent editing activities. One activity is designated as 'pretransfer' editing and involves the hydrolysis of activated Val-AMP. The other activity is designated 'posttransfer' editing and involves deacylation of mischarged Val-tRNA(Ile). This chain is Isoleucine--tRNA ligase, found in Mycoplasmopsis synoviae (strain 53) (Mycoplasma synoviae).